Consider the following 254-residue polypeptide: Probable transcriptional regulatory protein MAE_13580 (254 aa).

Belongs to the TACO1 family.

The protein localises to the cytoplasm. In Microcystis aeruginosa (strain NIES-843 / IAM M-2473), this protein is Probable transcriptional regulatory protein MAE_13580.